Here is a 347-residue protein sequence, read N- to C-terminus: NADH-ubiquinone oxidoreductase chain 2 (347 aa).

Transmembrane regions (helical) follow at residues 3 to 23 (PMTSTILLMTIMSGTSIVLMS), 25 to 45 (HWFMTWLGFEMNMMAIIPILM), 59 to 79 (YFLTQATASMILVLAIIINLM), 96 to 116 (TLITIALVMKLGLAPFHFWVP), 122 to 142 (VSLSSGLILLTWQKIAPLSLL), 149 to 169 (INTNLLLTMSLLSIMIGGWGG), 178 to 198 (IMAYSSIAHMGWMIVIMIYNP), 200 to 220 (LSLLNLFIYIMMTSSMFMLLI), 240 to 260 (ITTMMMATLLSLGGLPPLTGF), 274 to 294 (NSVILPTLMAILALLNLFFYM), and 326 to 346 (MTMLISISTLALPLTPLFISL).

Belongs to the complex I subunit 2 family. As to quaternary structure, core subunit of respiratory chain NADH dehydrogenase (Complex I) which is composed of 45 different subunits. Interacts with TMEM242.

The protein resides in the mitochondrion inner membrane. It carries out the reaction a ubiquinone + NADH + 5 H(+)(in) = a ubiquinol + NAD(+) + 4 H(+)(out). Its function is as follows. Core subunit of the mitochondrial membrane respiratory chain NADH dehydrogenase (Complex I) which catalyzes electron transfer from NADH through the respiratory chain, using ubiquinone as an electron acceptor. Essential for the catalytic activity and assembly of complex I. The chain is NADH-ubiquinone oxidoreductase chain 2 from Sylvisorex granti (Grant's forest shrew).